Reading from the N-terminus, the 341-residue chain is Methionine import ATP-binding protein MetN 2 (341 aa).

Residues 2–241 (IELKEVVKEY…PQHTVTKRFV (240 aa)) enclose the ABC transporter domain. Residue 38–45 (GFSGAGKS) participates in ATP binding.

The protein belongs to the ABC transporter superfamily. Methionine importer (TC 3.A.1.24) family. The complex is composed of two ATP-binding proteins (MetN), two transmembrane proteins (MetI) and a solute-binding protein (MetQ).

Its subcellular location is the cell membrane. It catalyses the reaction L-methionine(out) + ATP + H2O = L-methionine(in) + ADP + phosphate + H(+). It carries out the reaction D-methionine(out) + ATP + H2O = D-methionine(in) + ADP + phosphate + H(+). Its function is as follows. Part of the ABC transporter complex MetNIQ involved in methionine import. Responsible for energy coupling to the transport system. The polypeptide is Methionine import ATP-binding protein MetN 2 (Staphylococcus aureus (strain USA300)).